The sequence spans 322 residues: ATP-dependent 6-phosphofructokinase (322 aa).

Residues G12, R73–F74, and G103–T106 each bind ATP. D104 is a binding site for Mg(2+). T126–D128 contributes to the substrate binding site. D128 functions as the Proton acceptor in the catalytic mechanism. R155 is a binding site for ADP. Residues R163 and M170 to R172 each bind substrate. Residues G186–E188, K212, and K214–S216 each bind ADP. Residues E223, R245, and H251–R254 contribute to the substrate site.

The protein belongs to the phosphofructokinase type A (PFKA) family. ATP-dependent PFK group I subfamily. Prokaryotic clade 'B1' sub-subfamily. As to quaternary structure, homotetramer. It depends on Mg(2+) as a cofactor.

It localises to the cytoplasm. The catalysed reaction is beta-D-fructose 6-phosphate + ATP = beta-D-fructose 1,6-bisphosphate + ADP + H(+). Its pathway is carbohydrate degradation; glycolysis; D-glyceraldehyde 3-phosphate and glycerone phosphate from D-glucose: step 3/4. With respect to regulation, allosterically activated by ADP and other diphosphonucleosides, and allosterically inhibited by phosphoenolpyruvate. Functionally, catalyzes the phosphorylation of D-fructose 6-phosphate to fructose 1,6-bisphosphate by ATP, the first committing step of glycolysis. This is ATP-dependent 6-phosphofructokinase from Mesomycoplasma hyopneumoniae (strain 232) (Mycoplasma hyopneumoniae).